The sequence spans 264 residues: Glycosylphosphatidylinositol anchor biosynthesis protein 11 (264 aa).

Residues 1–45 (MPLVDPVTMSTPSTPAKAMGKSLPNTVKDPSPPPKAGSHTRSPVE) are disordered. A run of 6 helical transmembrane segments spans residues 49–69 (NSYY…VLLW), 83–103 (LILP…LPVA), 132–152 (LLSL…MVLF), 160–180 (APHT…PLFY), 202–222 (SVGG…PIPL), and 233–253 (VTVL…GRTL).

Belongs to the PIGF family.

It localises to the endoplasmic reticulum membrane. It functions in the pathway glycolipid biosynthesis; glycosylphosphatidylinositol-anchor biosynthesis. In terms of biological role, acts in the GPI biosynthetic pathway between GlcNAc-PI synthesis and GPI transfer to protein. This Pyricularia oryzae (strain 70-15 / ATCC MYA-4617 / FGSC 8958) (Rice blast fungus) protein is Glycosylphosphatidylinositol anchor biosynthesis protein 11 (GPI11).